Consider the following 120-residue polypeptide: Flagellar protein FliT (120 aa).

The required for homodimerization stretch occupies residues 1–50; the sequence is MTNFIPSLTDWHALHALSITMLDLAHSGKWDELIEQEMNYVQLVEGIARN. The segment at 59-97 is fliD binding; sequence LINQAKEILNAVLRNEAELKTLLQHRMEELRQLIDQTGK.

Belongs to the FliT family. As to quaternary structure, homodimer. Interacts with FliD and FlhC.

It localises to the cytoplasm. The protein localises to the cytosol. Functionally, dual-function protein that regulates the transcription of class 2 flagellar operons and that also acts as an export chaperone for the filament-capping protein FliD. As a transcriptional regulator, acts as an anti-FlhDC factor; it directly binds FlhC, thus inhibiting the binding of the FlhC/FlhD complex to class 2 promoters, resulting in decreased expression of class 2 flagellar operons. As a chaperone, effects FliD transition to the membrane by preventing its premature polymerization, and by directing it to the export apparatus. The chain is Flagellar protein FliT from Citrobacter koseri (strain ATCC BAA-895 / CDC 4225-83 / SGSC4696).